A 198-amino-acid chain; its full sequence is 7-methyl-GTP pyrophosphatase (198 aa).

The active-site Proton acceptor is aspartate 75.

Belongs to the Maf family. YceF subfamily. It depends on a divalent metal cation as a cofactor.

It localises to the cytoplasm. It carries out the reaction N(7)-methyl-GTP + H2O = N(7)-methyl-GMP + diphosphate + H(+). Its function is as follows. Nucleoside triphosphate pyrophosphatase that hydrolyzes 7-methyl-GTP (m(7)GTP). May have a dual role in cell division arrest and in preventing the incorporation of modified nucleotides into cellular nucleic acids. The chain is 7-methyl-GTP pyrophosphatase from Nitrosospira multiformis (strain ATCC 25196 / NCIMB 11849 / C 71).